The sequence spans 1373 residues: Inactive tyrosine-protein kinase PRAG1 (1373 aa).

2 disordered regions span residues 31 to 50 (AGHP…LPAR) and 197 to 235 (TSSC…DSEG). Tyrosine 238 is subject to Phosphotyrosine. 2 stretches are compositionally biased toward basic and acidic residues: residues 250–263 (DAVH…RRGG) and 272–284 (QGPR…EEKQ). The tract at residues 250–338 (DAVHSTEGSG…SGASSPFAPH (89 aa)) is disordered. Positions 317 to 333 (SSSDGLSCGSSRSGASS) are enriched in low complexity. Phosphotyrosine is present on residues tyrosine 343 and tyrosine 391. Disordered regions lie at residues 376–448 (QPAS…NPAP) and 468–794 (IYLS…LPQK). Residues 419-438 (SQGQVWTGDTWIQKTPPSWS) are compositionally biased toward polar residues. The segment covering 506-522 (RESHPHNVTENTAKEKP) has biased composition (basic and acidic residues). A compositionally biased stretch (low complexity) spans 526-538 (PKLSKSSPGGSPV). Composition is skewed to polar residues over residues 568–578 (NLTSSCHTNGV) and 655–670 (TSGQ…SKSA). Phosphoserine is present on residues serine 671 and serine 720. Composition is skewed to polar residues over residues 711–721 (VSQSSAESLSP) and 729–740 (SFTTGSTDSLAS). Serine 757 and serine 802 each carry phosphoserine. Residues 804–823 (PDGFFWTQGSPKPRTASPKL) form a disordered region. A required for homodimerization region spans residues 911 to 954 (STQLQLHSLLSSISSKEGTYAKLGGLYTQSLARLVTKCEDLFMG). Residues 945-1296 (VTKCEDLFMG…EAKRVLQCLL (352 aa)) form the Protein kinase domain. Positions 1041-1050 (LASPDTSSKD) are enriched in polar residues. Disordered stretches follow at residues 1041–1062 (LASP…PPAQ) and 1138–1171 (QSSP…QGGP). Low complexity predominate over residues 1139 to 1167 (SSPGPSATPTVPTTTSRCPSAAPAATTAC). A required for homodimerization region spans residues 1298–1373 (GPRRELVEQP…LQSLKLLQLL (76 aa)).

Belongs to the protein kinase superfamily. As to quaternary structure, homodimer. Dimerization leads to the catalytic activation of CSK. Interacts (via C-terminus) with RND2. Interacts with CSK (via SH2 domain) in a Tyr-391 phosphorylation-dependent manner; this interaction potentiates kinase activity of CSK. Interacts with NOTCH1 intracellular domain (N1ICD). Forms a complex with PRAG1, N1ICD and MAML1, in a MAML1-dependent manner. Post-translationally, phosphorylated by CSK on Tyr-238, Tyr-343, and Tyr-391; Tyr-391 is a primary site of phosphorylation.

Its subcellular location is the cytoplasm. It is found in the nucleus. It localises to the cell junction. The protein resides in the focal adhesion. Functionally, catalytically inactive protein kinase that acts as a scaffold protein. Functions as an effector of the small GTPase RND2, which stimulates RhoA activity and inhibits NGF-induced neurite outgrowth. Promotes Src family kinase (SFK) signaling by regulating the subcellular localization of CSK, a negative regulator of these kinases, leading to the regulation of cell morphology and motility by a CSK-dependent mechanism. Acts as a critical coactivator of Notch signaling. The sequence is that of Inactive tyrosine-protein kinase PRAG1 from Mus musculus (Mouse).